The primary structure comprises 84 residues: Small ribosomal subunit protein bS20 (84 aa).

This sequence belongs to the bacterial ribosomal protein bS20 family.

Binds directly to 16S ribosomal RNA. This is Small ribosomal subunit protein bS20 from Levilactobacillus brevis (strain ATCC 367 / BCRC 12310 / CIP 105137 / JCM 1170 / LMG 11437 / NCIMB 947 / NCTC 947) (Lactobacillus brevis).